The chain runs to 451 residues: Exodeoxyribonuclease 7 large subunit (451 aa).

The protein belongs to the XseA family. As to quaternary structure, heterooligomer composed of large and small subunits.

The protein localises to the cytoplasm. It catalyses the reaction Exonucleolytic cleavage in either 5'- to 3'- or 3'- to 5'-direction to yield nucleoside 5'-phosphates.. In terms of biological role, bidirectionally degrades single-stranded DNA into large acid-insoluble oligonucleotides, which are then degraded further into small acid-soluble oligonucleotides. In Neisseria meningitidis serogroup A / serotype 4A (strain DSM 15465 / Z2491), this protein is Exodeoxyribonuclease 7 large subunit.